We begin with the raw amino-acid sequence, 221 residues long: Peptide methionine sulfoxide reductase MsrA (221 aa).

Residue C54 is part of the active site.

It belongs to the MsrA Met sulfoxide reductase family.

It carries out the reaction L-methionyl-[protein] + [thioredoxin]-disulfide + H2O = L-methionyl-(S)-S-oxide-[protein] + [thioredoxin]-dithiol. The enzyme catalyses [thioredoxin]-disulfide + L-methionine + H2O = L-methionine (S)-S-oxide + [thioredoxin]-dithiol. Functionally, has an important function as a repair enzyme for proteins that have been inactivated by oxidation. Catalyzes the reversible oxidation-reduction of methionine sulfoxide in proteins to methionine. The polypeptide is Peptide methionine sulfoxide reductase MsrA (Methylobacterium sp. (strain 4-46)).